The chain runs to 116 residues: Large ribosomal subunit protein uL23 (116 aa).

This sequence belongs to the universal ribosomal protein uL23 family. Part of the 50S ribosomal subunit. Contacts protein L29, and trigger factor when it is bound to the ribosome.

In terms of biological role, one of the early assembly proteins it binds 23S rRNA. One of the proteins that surrounds the polypeptide exit tunnel on the outside of the ribosome. Forms the main docking site for trigger factor binding to the ribosome. The sequence is that of Large ribosomal subunit protein uL23 from Psychrobacter sp. (strain PRwf-1).